Reading from the N-terminus, the 903-residue chain is Translation initiation factor IF-2 (903 aa).

The interval 66–296 (QATLKGEGPV…GRSRKREMEN (231 aa)) is disordered. Basic and acidic residues predominate over residues 121-132 (NTDETRVQEHKP). 2 stretches are compositionally biased toward low complexity: residues 139–152 (AGDA…AAAG) and 178–195 (AATG…GQQS). Positions 204–231 (EGRSRQDENKGSAREDQANRFATRDKEA) are enriched in basic and acidic residues. Positions 246 to 255 (RRPAHSKPLR) are enriched in basic residues. Composition is skewed to basic and acidic residues over residues 263–276 (VTKD…DRSN) and 285–296 (ESGRSRKREMEN). In terms of domain architecture, tr-type G spans 403–572 (ERPPVVTVMG…LLTADVAELK (170 aa)). The G1 stretch occupies residues 412 to 419 (GHVDHGKT). Position 412–419 (412–419 (GHVDHGKT)) interacts with GTP. A G2 region spans residues 437–441 (GITQH). The tract at residues 458 to 461 (DTPG) is G3. Residues 458–462 (DTPGH) and 512–515 (NKID) contribute to the GTP site. Residues 512-515 (NKID) are G4. Residues 548-550 (SAV) are G5.

This sequence belongs to the TRAFAC class translation factor GTPase superfamily. Classic translation factor GTPase family. IF-2 subfamily.

It localises to the cytoplasm. One of the essential components for the initiation of protein synthesis. Protects formylmethionyl-tRNA from spontaneous hydrolysis and promotes its binding to the 30S ribosomal subunits. Also involved in the hydrolysis of GTP during the formation of the 70S ribosomal complex. The sequence is that of Translation initiation factor IF-2 from Moorella thermoacetica (strain ATCC 39073 / JCM 9320).